The primary structure comprises 360 residues: Peptide chain release factor 1 (360 aa).

Gln235 carries the post-translational modification N5-methylglutamine.

The protein belongs to the prokaryotic/mitochondrial release factor family. Methylated by PrmC. Methylation increases the termination efficiency of RF1.

Its subcellular location is the cytoplasm. Peptide chain release factor 1 directs the termination of translation in response to the peptide chain termination codons UAG and UAA. The polypeptide is Peptide chain release factor 1 (Burkholderia multivorans (strain ATCC 17616 / 249)).